We begin with the raw amino-acid sequence, 149 residues long: Nucleoside diphosphate kinase (149 aa).

The ATP site is built by Lys9, Phe57, Arg85, Thr91, Arg102, and Asn112. His115 (pros-phosphohistidine intermediate) is an active-site residue.

It belongs to the NDK family. Homotetramer. Requires Mg(2+) as cofactor.

It is found in the cytoplasm. It catalyses the reaction a 2'-deoxyribonucleoside 5'-diphosphate + ATP = a 2'-deoxyribonucleoside 5'-triphosphate + ADP. The enzyme catalyses a ribonucleoside 5'-diphosphate + ATP = a ribonucleoside 5'-triphosphate + ADP. Major role in the synthesis of nucleoside triphosphates other than ATP. The ATP gamma phosphate is transferred to the NDP beta phosphate via a ping-pong mechanism, using a phosphorylated active-site intermediate. The polypeptide is Nucleoside diphosphate kinase (Heliobacterium modesticaldum (strain ATCC 51547 / Ice1)).